A 535-amino-acid polypeptide reads, in one-letter code: Dual specificity mitogen-activated protein kinase kinase 7 (535 aa).

A2 is modified (N-acetylalanine). A coiled-coil region spans residues 2–30 (AASSLEQKLSRLEAKLKQENREARRRIDL). The d domain stretch occupies residues 37 to 73 (QRPRPIIVITLSPAPAPSQRAALQLPLANDGGSRSPS). A disordered region spans residues 63-93 (LANDGGSRSPSSESSPQHPTPPTRPRHMLGL). Positions 69 to 79 (SRSPSSESSPQ) are enriched in low complexity. The Protein kinase domain maps to 136–396 (LENLGEMGSG…YNKLLEHSFI (261 aa)). Residues 142 to 150 (MGSGTCGQV) and K165 contribute to the ATP site. Catalysis depends on D259, which acts as the Proton acceptor. Residue S287 is modified to Phosphoserine; by MAP3K. At T291 the chain carries Phosphothreonine; by MAP3K. Positions 393–416 (HSFIKHYEILEVDVASWFKDVMAK) are DVD domain. S427 is subject to Phosphoserine.

This sequence belongs to the protein kinase superfamily. STE Ser/Thr protein kinase family. MAP kinase kinase subfamily. Interacts with RASSF7, the interaction promotes phosphorylation. Interacts with VRK2. Interacts (via its D domain) with its substrates MAPK8/JNK1, MAPK9/JNK2 and MAPK10/JNK3. Interacts (via its DVD domain) with MAP3Ks activators like MAP3K5/ASK1 and MAP3K1/MEKK1. Interacts with SH3RF1, MAPK8IP1/JIP1, MAPK8IP2/JIP2 and MAPK8IP3/JIP3 scaffold proteins. Found in a complex with SH3RF1, RAC1, MAP3K11/MLK3, MAPK8IP1/JIP1 and MAPK8/JNK1. Found in a complex with SH3RF1, RAC2, MAP3K7/TAK1, MAPK8IP1/JIP1, MAPK8/JNK1 and MAPK9/JNK2. It depends on Mg(2+) as a cofactor. Post-translationally, activated by phosphorylation on Ser-287 and Thr-291 by MAP kinase kinase kinases (MAP3Ks). As to expression, expressed at high levels in brain, lung, liver, skeletal muscle, kidney, and testis and at lower levels in the heart and spleen.

It localises to the nucleus. The protein resides in the cytoplasm. It carries out the reaction L-seryl-[protein] + ATP = O-phospho-L-seryl-[protein] + ADP + H(+). The enzyme catalyses L-threonyl-[protein] + ATP = O-phospho-L-threonyl-[protein] + ADP + H(+). It catalyses the reaction L-tyrosyl-[protein] + ATP = O-phospho-L-tyrosyl-[protein] + ADP + H(+). Activated by phosphorylation by specific MAP kinase kinase kinases such as MAP3K1/MEKK1, MAP3K3/MEKK3, MAP3K11/MLK3 and MAP3K12/DLK. Isoforms 3 and 4 have lower basal activity but a higher level of inducible activation, than isoforms 2, 6, 7 and 8. Dual specificity protein kinase which acts as an essential component of the MAP kinase signal transduction pathway. Essential component of the stress-activated protein kinase/c-Jun N-terminal kinase (SAP/JNK) signaling pathway. With MAP2K4/MKK4, is the one of the only known kinase to directly activate the stress-activated protein kinase/c-Jun N-terminal kinases MAPK8/JNK1, MAPK9/JNK2 and MAPK10/JNK3. MAP2K4/MKK4 and MAP2K7/MKK7 both activate the JNKs by phosphorylation, but they differ in their preference for the phosphorylation site in the Thr-Pro-Tyr motif. MAP2K4/MKK4 shows preference for phosphorylation of the Tyr residue and MAP2K7/MKK7 for the Thr residue. The monophosphorylation of JNKs on the Thr residue is sufficient to increase JNK activity indicating that MAP2K7/MKK7 is important to trigger JNK activity, while the additional phosphorylation of the Tyr residue by MAP2K4/MKK4 ensures optimal JNK activation. Has a specific role in JNK signal transduction pathway activated by pro-inflammatory cytokines. The MKK/JNK signaling pathway is also involved in mitochondrial death signaling pathway, including the release cytochrome c, leading to apoptosis. Part of a non-canonical MAPK signaling pathway, composed of the upstream MAP3K12 kinase and downstream MAP kinases MAPK1/ERK2 and MAPK3/ERK1, that enhances the AP-1-mediated transcription of APP in response to APOE. In Mus musculus (Mouse), this protein is Dual specificity mitogen-activated protein kinase kinase 7.